The sequence spans 657 residues: MSDNGSPAVLPKTEFNKYKIGKVKSTPAIQRDAKTNLTYIKLRKRSSEKVYGCTVFQNHYREDEKLGQGTFGEVYKGIHLETQRQVAMKKIIVSVEKDLFPITAQREITILKRLNHKNIIKLIEMVYDHSPDITNAASSNLHKSFYMILPYMVADLSGVLHNPRINLEMCDIKNMMLQILEGLNYIHCAKFMHRDIKTANILIDHNGVLKLADFGLARLYYGCPPNLKYPGGAGSGAKYTSVVVTRWYRAPELVLGDKQYTTAVDIWGVGCVFAEFFEKKPILQGKTDIDQGHVIFKLLGTPTEEDWAVARYLPGAELTTTNYKPTLRERFGKYLSETGLDFLGQLLALDPYKRLTAMSAKHHPWFKEDPLPSEKITLPTEESHEADIKRYKEEMHQSLSQRVPTAPRGHIVEKGESPVVKNLGAIPRGPKKDDASFLPPSKNVLAKPPPSKIRELHQNPRPYHVNSGYAKTAIPPPAAPAGVNRYGPNNSSRNNRFSGNSTAPNNSRNPVNRFHPETNVSSKYNKVPLPLGPQSRYQGNSNESRYKNSPNDSRYHNPRYVNKPETNFNRQPQKYSRQESNAPINKNYNPSNGSRNMAGDHHQGSRPSHPQFPISPSQGQHQLTSKPIEKKNGSFKDERAKPDESKEFQNSDIADLY.

Residues 60 to 366 (YREDEKLGQG…AMSAKHHPWF (307 aa)) form the Protein kinase domain. ATP contacts are provided by residues 66-74 (LGQGTFGEV) and Lys89. Asp195 serves as the catalytic Proton acceptor. Residue Thr240 is modified to Phosphothreonine; by CAK. At Ser400 the chain carries Phosphoserine. A Phosphothreonine modification is found at Thr405. The interval 414–657 (KGESPVVKNL…FQNSDIADLY (244 aa)) is disordered. Ser417 carries the phosphoserine modification. A compositionally biased stretch (low complexity) spans 489–501 (NNSSRNNRFSGNS). 3 stretches are compositionally biased toward polar residues: residues 535-552 (SRYQGNSNESRYKNSPND), 564-595 (PETNFNRQPQKYSRQESNAPINKNYNPSNGSR), and 614-625 (ISPSQGQHQLTS). A compositionally biased stretch (basic and acidic residues) spans 627 to 649 (PIEKKNGSFKDERAKPDESKEFQ). Residue Ser634 is modified to Phosphoserine.

The protein belongs to the protein kinase superfamily. CMGC Ser/Thr protein kinase family. CDC2/CDKX subfamily. Belongs to the BUR kinase complex composed of SGV1/BUR1 and BUR2. Interacts with BUR2 and RBP1.

Its subcellular location is the nucleus. The enzyme catalyses L-seryl-[protein] + ATP = O-phospho-L-seryl-[protein] + ADP + H(+). It catalyses the reaction L-threonyl-[protein] + ATP = O-phospho-L-threonyl-[protein] + ADP + H(+). It carries out the reaction [DNA-directed RNA polymerase] + ATP = phospho-[DNA-directed RNA polymerase] + ADP + H(+). Functionally, serine/threonine-protein kinase component of the BUR kinase complex involved in transcription regulation. This complex phosphorylates 'Ser-120' of the UBC2/RAD6 ubiquitin-conjugating enzyme (E2), leading to monoubiquitination of histone H2B, the localization of the PAF1 complex to the chromatin, and the silencing of telomeric-associated genes. Also required for histone H3 'Lys-4' trimethylation. May phosphorylate the 'Ser-5' of the RBP1 carboxy-terminal domain (CTD) repeats. Necessary for the recovery from pheromone-induced growth arrest in the cell cycle G1 phase. The kinase activity of the complex requires the presence of BUR2. This Saccharomyces cerevisiae (strain ATCC 204508 / S288c) (Baker's yeast) protein is Serine/threonine-protein kinase BUR1 (SGV1).